The primary structure comprises 349 residues: Cytoplasmic tRNA 2-thiolation protein 2 (349 aa).

The protein belongs to the CTU2/NCS2 family.

The protein localises to the cytoplasm. It functions in the pathway tRNA modification; 5-methoxycarbonylmethyl-2-thiouridine-tRNA biosynthesis. Its function is as follows. Plays a central role in 2-thiolation of mcm(5)S(2)U at tRNA wobble positions of tRNA(Lys), tRNA(Glu) and tRNA(Gln). May act by forming a heterodimer with tut-1/ctu-1 that ligates sulfur from thiocarboxylated urm-1 onto the uridine of tRNAs at wobble position. The chain is Cytoplasmic tRNA 2-thiolation protein 2 from Caenorhabditis elegans.